The following is a 463-amino-acid chain: Ribosomal protein uS12 methylthiotransferase RimO (463 aa).

One can recognise an MTTase N-terminal domain in the interval 15–130 (PKVGFVSLGC…VMQAVHSHLP (116 aa)). [4Fe-4S] cluster is bound by residues Cys-24, Cys-60, Cys-89, Cys-161, Cys-165, and Cys-168. One can recognise a Radical SAM core domain in the interval 147–392 (LTPRHYAYLK…MEVAEQVSAK (246 aa)). In terms of domain architecture, TRAM spans 395–463 (ARKVGKTLKV…ADGHDLWGEV (69 aa)).

It belongs to the methylthiotransferase family. RimO subfamily. Requires [4Fe-4S] cluster as cofactor.

Its subcellular location is the cytoplasm. The catalysed reaction is L-aspartate(89)-[ribosomal protein uS12]-hydrogen + (sulfur carrier)-SH + AH2 + 2 S-adenosyl-L-methionine = 3-methylsulfanyl-L-aspartate(89)-[ribosomal protein uS12]-hydrogen + (sulfur carrier)-H + 5'-deoxyadenosine + L-methionine + A + S-adenosyl-L-homocysteine + 2 H(+). In terms of biological role, catalyzes the methylthiolation of an aspartic acid residue of ribosomal protein uS12. This chain is Ribosomal protein uS12 methylthiotransferase RimO, found in Paraburkholderia phymatum (strain DSM 17167 / CIP 108236 / LMG 21445 / STM815) (Burkholderia phymatum).